A 57-amino-acid polypeptide reads, in one-letter code: Potassium channel toxin alpha-KTx 8.7 (57 aa).

Residues 1 to 28 (MSRLYAIILIALVFNVIMTIMPDMKVEA) form the signal peptide. 3 cysteine pairs are disulfide-bonded: cysteine 31–cysteine 47, cysteine 34–cysteine 52, and cysteine 38–cysteine 54.

In terms of tissue distribution, expressed by the venom gland.

The protein resides in the secreted. Inhibits voltage-gated potassium channel rKv1.1/KCNA1 at nanomolar ranges (IC(50)=8.5 nM). In Mesobuthus eupeus (Lesser Asian scorpion), this protein is Potassium channel toxin alpha-KTx 8.7.